The sequence spans 277 residues: Release factor glutamine methyltransferase (277 aa).

S-adenosyl-L-methionine is bound by residues 119 to 123, D142, W170, and N184; that span reads GTGCG. Position 184-187 (184-187) interacts with substrate; it reads NPPY.

The protein belongs to the protein N5-glutamine methyltransferase family. PrmC subfamily.

It carries out the reaction L-glutaminyl-[peptide chain release factor] + S-adenosyl-L-methionine = N(5)-methyl-L-glutaminyl-[peptide chain release factor] + S-adenosyl-L-homocysteine + H(+). In terms of biological role, methylates the class 1 translation termination release factors RF1/PrfA and RF2/PrfB on the glutamine residue of the universally conserved GGQ motif. The chain is Release factor glutamine methyltransferase from Buchnera aphidicola subsp. Baizongia pistaciae (strain Bp).